We begin with the raw amino-acid sequence, 65 residues long: UPF0434 protein IL1511 (65 aa).

The protein belongs to the UPF0434 family.

The chain is UPF0434 protein IL1511 from Idiomarina loihiensis (strain ATCC BAA-735 / DSM 15497 / L2-TR).